The following is an 81-amino-acid chain: MKTLLLTLVVVTIVCLDLGNSLKCYVSREGKTQTCPEGEKLCEKYAVSYFHDGRWRYRYECTSACHRGPYNVCCSTDLCNK.

A signal peptide spans 1–21 (MKTLLLTLVVVTIVCLDLGNS). Cystine bridges form between Cys24/Cys42, Cys35/Cys61, Cys65/Cys73, and Cys74/Cys79.

This sequence belongs to the three-finger toxin family. Short-chain subfamily. Contains 4 disulfide bonds. As to expression, expressed by the venom gland.

The protein resides in the secreted. Functionally, snake venom neurotoxin that blocks neuromuscular transmission on both avian and mouse nerve-muscle preparations, presenting a postsynaptic action through the nicotinic acetylcholine receptor (nAChR). Reversibly inhibits twitches in mouse phrenic nerve diaphragm and irreversibly in chick biventer cervicis muscle. Has no cytotoxic activity towards C2C12 cells up to 180 ug/ml. The sequence is that of Mipartoxin-1 from Micrurus mipartitus (Red-tailed coral snake).